Here is a 56-residue protein sequence, read N- to C-terminus: Large ribosomal subunit protein bL33 (56 aa).

Belongs to the bacterial ribosomal protein bL33 family.

This chain is Large ribosomal subunit protein bL33, found in Ehrlichia ruminantium (strain Gardel).